The primary structure comprises 596 residues: Sodium/mannose cotransporter SLC5A10 (596 aa).

Topologically, residues 1-15 are extracellular; it reads MAANSTSDLHTPGTQ. N4 carries an N-linked (GlcNAc...) asparagine glycan. Residues 16-36 form a helical membrane-spanning segment; the sequence is LSVADIIVITVYFALNVAVGI. Topologically, residues 37-72 are cytoplasmic; sequence WSSCRASRNTVNGYFLAGRDMTWWPIGASLFASSEG. The helical transmembrane segment at 73 to 93 threads the bilayer; sequence SGLFIGLAGSGAAGGLAVAGF. The Extracellular segment spans residues 94-99; it reads EWNATY. The N-linked (GlcNAc...) asparagine glycan is linked to N96. Residues 100-120 form a helical membrane-spanning segment; that stretch reads VLLALAWVFVPIYISSEIVTL. Over 121 to 149 the chain is Cytoplasmic; that stretch reads PEYIQKRYGGQRIRMYLSVLSLLLSVFTK. S141 and S145 each carry phosphoserine. T148 is modified (phosphothreonine). A helical membrane pass occupies residues 150-170; the sequence is ISLDLYAGALFVHICLGWNFY. At 171–173 the chain is on the extracellular side; the sequence is LST. Residues 174-194 form a helical membrane-spanning segment; sequence ILTLGITALYTIAGGLAAVIY. Over 195-200 the chain is Cytoplasmic; that stretch reads TDALQT. Residues 201 to 221 traverse the membrane as a helical segment; sequence LIMVVGAVILTIKAFDQIGGY. Residues 222 to 264 lie on the Extracellular side of the membrane; the sequence is GQLEAAYAQAIPSRTIANTTCHLPRTDAMHMFRDPHTGDLPWT. The helical transmembrane segment at 265-285 threads the bilayer; it reads GMTFGLTIMATWYWCTDQVIV. The Cytoplasmic segment spans residues 286-300; the sequence is QRSLSARDLNHAKAG. Residues 301–321 traverse the membrane as a helical segment; the sequence is SILASYLKMLPMGLIIMPGMI. Over 322 to 355 the chain is Extracellular; the sequence is SRALFPDDVGCVVPSECLRACGAEVGCSNIAYPK. A helical membrane pass occupies residues 356-376; the sequence is LVMELMPIGLRGLMIAVMLAA. At 377-409 the chain is on the cytoplasmic side; that stretch reads LMSSLTSIFNSSSTLFTMDIWRRLRPRSGEREL. Residues 410 to 430 traverse the membrane as a helical segment; it reads LLVGRLVIVALIGVSVAWIPV. The Extracellular portion of the chain corresponds to 431–443; sequence LQDSNSGQLFIYM. Residues 444-464 form a helical membrane-spanning segment; it reads QSVTSSLAPPVTAVFVLGVFW. Over 465-471 the chain is Cytoplasmic; it reads RRANEQG. The helical transmembrane segment at 472-492 threads the bilayer; it reads AFWGLIAGLVVGATRLVLEFL. The Extracellular segment spans residues 493 to 513; that stretch reads NPAPPCGEPDTRPAVLGSIHY. Residues 514–534 form a helical membrane-spanning segment; sequence LHFAVALFALSGAVVVAGSLL. The Cytoplasmic segment spans residues 535–575; it reads TPPPQSVQIENLTWWTLAQDVPLGTKAGDGQTPQKHAFWAR. The helical transmembrane segment at 576 to 596 threads the bilayer; that stretch reads VCGFNAILLMCVNIFFYAYFA.

It belongs to the sodium:solute symporter (SSF) (TC 2.A.21) family. In terms of tissue distribution, predominantly expressed at high levels in kidney. Very low expression is detected in testes. Expressed in kidney. As to expression, the most abundant isoform expressed in kidney.

It is found in the apical cell membrane. The catalysed reaction is D-mannose(out) + Na(+)(out) = D-mannose(in) + Na(+)(in). It carries out the reaction D-fructopyranose(out) + Na(+)(out) = D-fructopyranose(in) + Na(+)(in). Its activity is regulated as follows. Inhibited by phlorizin. Its function is as follows. Electrogenic Na+-coupled sugar symporter that actively transports D-mannose or D-fructose at the plasma membrane, with a Na+ to sugar coupling ratio of 1:1. Transporter activity is driven by a transmembrane Na+ electrochemical gradient set by the Na+/K+ pump. Exclusively recognizes sugar substrates having a pyranose ring with an axial hydroxyl group on carbon 2. Has likely evolved to enable renal reabsorption of D-mannose, an important constituent of oligosaccharide chains of glycoproteins. Contributes to dietary D-fructose reabsorption from glomerular filtrate across the brush border of the kidney. Appears to have no transporter activity. The polypeptide is Sodium/mannose cotransporter SLC5A10 (SLC5A10) (Homo sapiens (Human)).